Consider the following 134-residue polypeptide: Large-conductance mechanosensitive channel (134 aa).

2 helical membrane passes run 16 to 36 (VIDL…VTAL) and 81 to 101 (GDFL…FIIV).

This sequence belongs to the MscL family. In terms of assembly, homopentamer.

Its subcellular location is the cell inner membrane. Its function is as follows. Channel that opens in response to stretch forces in the membrane lipid bilayer. May participate in the regulation of osmotic pressure changes within the cell. In Xylella fastidiosa (strain M12), this protein is Large-conductance mechanosensitive channel.